The primary structure comprises 569 residues: Proline--tRNA ligase (569 aa).

Belongs to the class-II aminoacyl-tRNA synthetase family. ProS type 1 subfamily. Homodimer.

The protein resides in the cytoplasm. It carries out the reaction tRNA(Pro) + L-proline + ATP = L-prolyl-tRNA(Pro) + AMP + diphosphate. In terms of biological role, catalyzes the attachment of proline to tRNA(Pro) in a two-step reaction: proline is first activated by ATP to form Pro-AMP and then transferred to the acceptor end of tRNA(Pro). As ProRS can inadvertently accommodate and process non-cognate amino acids such as alanine and cysteine, to avoid such errors it has two additional distinct editing activities against alanine. One activity is designated as 'pretransfer' editing and involves the tRNA(Pro)-independent hydrolysis of activated Ala-AMP. The other activity is designated 'posttransfer' editing and involves deacylation of mischarged Ala-tRNA(Pro). The misacylated Cys-tRNA(Pro) is not edited by ProRS. The chain is Proline--tRNA ligase from Halalkalibacterium halodurans (strain ATCC BAA-125 / DSM 18197 / FERM 7344 / JCM 9153 / C-125) (Bacillus halodurans).